Consider the following 75-residue polypeptide: UPF0352 protein ETA_12580 (75 aa).

The protein belongs to the UPF0352 family.

The chain is UPF0352 protein ETA_12580 from Erwinia tasmaniensis (strain DSM 17950 / CFBP 7177 / CIP 109463 / NCPPB 4357 / Et1/99).